A 354-amino-acid polypeptide reads, in one-letter code: Uroporphyrinogen decarboxylase (354 aa).

Substrate contacts are provided by residues 27 to 31, Asp-77, Tyr-154, Thr-209, and His-327; that span reads RQAGR.

This sequence belongs to the uroporphyrinogen decarboxylase family. In terms of assembly, homodimer.

It localises to the cytoplasm. The catalysed reaction is uroporphyrinogen III + 4 H(+) = coproporphyrinogen III + 4 CO2. Its pathway is porphyrin-containing compound metabolism; protoporphyrin-IX biosynthesis; coproporphyrinogen-III from 5-aminolevulinate: step 4/4. Catalyzes the decarboxylation of four acetate groups of uroporphyrinogen-III to yield coproporphyrinogen-III. This is Uroporphyrinogen decarboxylase from Actinobacillus succinogenes (strain ATCC 55618 / DSM 22257 / CCUG 43843 / 130Z).